Here is a 1268-residue protein sequence, read N- to C-terminus: Meiosis inhibitor protein 1 (1268 aa).

As to expression, strongly expressed in testis, weakly in brain, and not detected in spleen, liver, kidney, small intestine or colon.

In terms of biological role, required for normal meiotic chromosome synapsis. May be involved in the formation of meiotic double-strand breaks (DSBs) in spermatocytes. The chain is Meiosis inhibitor protein 1 from Mus musculus (Mouse).